The chain runs to 268 residues: Imidazole glycerol phosphate synthase subunit HisF (268 aa).

Active-site residues include Asp12 and Asp131.

It belongs to the HisA/HisF family. As to quaternary structure, heterodimer of HisH and HisF.

It localises to the cytoplasm. The catalysed reaction is 5-[(5-phospho-1-deoxy-D-ribulos-1-ylimino)methylamino]-1-(5-phospho-beta-D-ribosyl)imidazole-4-carboxamide + L-glutamine = D-erythro-1-(imidazol-4-yl)glycerol 3-phosphate + 5-amino-1-(5-phospho-beta-D-ribosyl)imidazole-4-carboxamide + L-glutamate + H(+). It functions in the pathway amino-acid biosynthesis; L-histidine biosynthesis; L-histidine from 5-phospho-alpha-D-ribose 1-diphosphate: step 5/9. IGPS catalyzes the conversion of PRFAR and glutamine to IGP, AICAR and glutamate. The HisF subunit catalyzes the cyclization activity that produces IGP and AICAR from PRFAR using the ammonia provided by the HisH subunit. This is Imidazole glycerol phosphate synthase subunit HisF from Methanoregula boonei (strain DSM 21154 / JCM 14090 / 6A8).